Here is a 126-residue protein sequence, read N- to C-terminus: CD59 glycoprotein (126 aa).

The first 25 residues, 1–25 (MGIQGGSVLFGLLLALAVFCHSGHS), serve as a signal peptide directing secretion. The UPAR/Ly6 domain occupies 26-106 (LQCYNCPNPT…QLENGGTSLS (81 aa)). 5 disulfide bridges follow: cysteine 28–cysteine 51, cysteine 31–cysteine 38, cysteine 44–cysteine 64, cysteine 70–cysteine 88, and cysteine 89–cysteine 94. Asparagine 43 is a glycosylation site (N-linked (GlcNAc...) asparagine). A lipid anchor (GPI-anchor amidated asparagine) is attached at asparagine 100. The propeptide at 101-126 (GGTSLSEKTVLLLVTPLLAAAWCLHP) is removed in mature form.

In terms of assembly, interacts with T-cell surface antigen CD2. Post-translationally, N- and O-glycosylated.

Its subcellular location is the cell membrane. The protein resides in the secreted. In terms of biological role, potent inhibitor of the complement membrane attack complex (MAC) action, which protects self-cells from damage during complement activation. Acts by binding to the beta-haipins of C8 (C8A and C8B) components of the assembling MAC, forming an intermolecular beta-sheet that prevents incorporation of the multiple copies of C9 required for complete formation of the osmolytic pore. The sequence is that of CD59 glycoprotein from Papio sp. (Baboon).